Consider the following 265-residue polypeptide: Thiazole synthase (265 aa).

Lys-103 (schiff-base intermediate with DXP) is an active-site residue. 1-deoxy-D-xylulose 5-phosphate-binding positions include Gly-164, 190 to 191 (AG), and 212 to 213 (NT).

It belongs to the ThiG family. In terms of assembly, homotetramer. Forms heterodimers with either ThiH or ThiS.

It is found in the cytoplasm. The enzyme catalyses [ThiS sulfur-carrier protein]-C-terminal-Gly-aminoethanethioate + 2-iminoacetate + 1-deoxy-D-xylulose 5-phosphate = [ThiS sulfur-carrier protein]-C-terminal Gly-Gly + 2-[(2R,5Z)-2-carboxy-4-methylthiazol-5(2H)-ylidene]ethyl phosphate + 2 H2O + H(+). The protein operates within cofactor biosynthesis; thiamine diphosphate biosynthesis. In terms of biological role, catalyzes the rearrangement of 1-deoxy-D-xylulose 5-phosphate (DXP) to produce the thiazole phosphate moiety of thiamine. Sulfur is provided by the thiocarboxylate moiety of the carrier protein ThiS. In vitro, sulfur can be provided by H(2)S. The polypeptide is Thiazole synthase (Bordetella bronchiseptica (strain ATCC BAA-588 / NCTC 13252 / RB50) (Alcaligenes bronchisepticus)).